The primary structure comprises 482 residues: Sugar transporter ERD6-like 16 (482 aa).

A run of 12 helical transmembrane segments spans residues 42–62 (LMVL…GSCV), 80–100 (LAEF…GAVM), 117–137 (SACF…ALLL), 142–162 (FFTG…IAEI), 173–193 (TLNQ…GSLI), 197–217 (TLAL…CFIP), 280–300 (VIIG…GIGF), 316–336 (LGTI…TILI), 344–364 (LIMI…TSFL), 382–402 (GVLI…WVIM), 413–433 (IAGS…SYTF), and 443–463 (GTFY…AKMV).

It belongs to the major facilitator superfamily. Sugar transporter (TC 2.A.1.1) family.

Its subcellular location is the membrane. Its function is as follows. Sugar transporter. In Arabidopsis thaliana (Mouse-ear cress), this protein is Sugar transporter ERD6-like 16.